The sequence spans 551 residues: E3 ubiquitin-protein ligase TRIM8 (551 aa).

The RING-type zinc finger occupies cysteine 15–asparagine 56. B box-type zinc fingers lie at residues cysteine 92–histidine 132 and valine 140–valine 182. Positions aspartate 181–glutamine 249 form a coiled coil.

This sequence belongs to the TRIM/RBCC family. As to quaternary structure, homodimer. Interacts with SOCS1 (via) SH2 domain and SOCS box. Interacts with HSP90AB1; prevents nucleus translocation of phosphorylated STAT3 and HSP90AB1. Interacts with MAP3K7/TAK1. Interacts with PIAS3. Interacts with TICAM1. Interacts with TRIM15; this interaction prevents TRIM8 cytoplasmic translocation. In terms of tissue distribution, widely expressed. Expressed in glomerular podocytes of kidneys.

It is found in the cytoplasm. Its subcellular location is the nucleus. It localises to the nuclear body. The catalysed reaction is S-ubiquitinyl-[E2 ubiquitin-conjugating enzyme]-L-cysteine + [acceptor protein]-L-lysine = [E2 ubiquitin-conjugating enzyme]-L-cysteine + N(6)-ubiquitinyl-[acceptor protein]-L-lysine.. The protein operates within protein modification; protein ubiquitination. Functionally, E3 ubiquitin-protein ligase that participates in multiple biological processes including cell survival, differentiation, apoptosis, and in particular, the innate immune response. Participates in the activation of interferon-gamma signaling by promoting proteasomal degradation of the repressor SOCS1. Plays a positive role in the TNFalpha and IL-1beta signaling pathways. Mechanistically, induces the 'Lys-63'-linked polyubiquitination of MAP3K7/TAK1 component leading to the activation of NF-kappa-B. Also modulates STAT3 activity through negative regulation of PIAS3, either by degradation of PIAS3 through the ubiquitin-proteasome pathway or exclusion of PIAS3 from the nucleus. Negatively regulates TLR3/4-mediated innate immune response by catalyzing 'Lys-6'- and 'Lys-33'-linked polyubiquitination of TICAM1 and thereby disrupting the TICAM1-TBK1 interaction. In Homo sapiens (Human), this protein is E3 ubiquitin-protein ligase TRIM8 (TRIM8).